The primary structure comprises 236 residues: 2,3,4,5-tetrahydropyridine-2,6-dicarboxylate N-acetyltransferase (236 aa).

Belongs to the transferase hexapeptide repeat family. DapH subfamily.

It catalyses the reaction (S)-2,3,4,5-tetrahydrodipicolinate + acetyl-CoA + H2O = L-2-acetamido-6-oxoheptanedioate + CoA. It participates in amino-acid biosynthesis; L-lysine biosynthesis via DAP pathway; LL-2,6-diaminopimelate from (S)-tetrahydrodipicolinate (acetylase route): step 1/3. In terms of biological role, catalyzes the transfer of an acetyl group from acetyl-CoA to tetrahydrodipicolinate. The polypeptide is 2,3,4,5-tetrahydropyridine-2,6-dicarboxylate N-acetyltransferase (Lactobacillus helveticus (strain DPC 4571)).